A 209-amino-acid polypeptide reads, in one-letter code: Large ribosomal subunit protein bL9 (209 aa).

Residues 184–209 (SAASEDSDLVETPEDRATEEAEDEQP) are disordered.

This sequence belongs to the bacterial ribosomal protein bL9 family.

Functionally, binds to the 23S rRNA. This Dinoroseobacter shibae (strain DSM 16493 / NCIMB 14021 / DFL 12) protein is Large ribosomal subunit protein bL9.